Consider the following 491-residue polypeptide: UDP-N-acetylmuramate--L-alanine ligase (491 aa).

ATP is bound at residue 126–132 (GTHGKTT).

It belongs to the MurCDEF family.

The protein resides in the cytoplasm. It carries out the reaction UDP-N-acetyl-alpha-D-muramate + L-alanine + ATP = UDP-N-acetyl-alpha-D-muramoyl-L-alanine + ADP + phosphate + H(+). It functions in the pathway cell wall biogenesis; peptidoglycan biosynthesis. Functionally, cell wall formation. The sequence is that of UDP-N-acetylmuramate--L-alanine ligase from Escherichia coli (strain K12 / MC4100 / BW2952).